Consider the following 547-residue polypeptide: Chaperonin GroEL (547 aa).

Residues 30–33, lysine 51, 87–91, glycine 415, and aspartate 496 contribute to the ATP site; these read TLGP and DGTTT. Positions 527-547 are disordered; it reads SDKAEPMPMRGGMGGMGGMDF. Positions 537 to 547 are enriched in gly residues; it reads GGMGGMGGMDF.

The protein belongs to the chaperonin (HSP60) family. Forms a cylinder of 14 subunits composed of two heptameric rings stacked back-to-back. Interacts with the co-chaperonin GroES.

Its subcellular location is the cytoplasm. It catalyses the reaction ATP + H2O + a folded polypeptide = ADP + phosphate + an unfolded polypeptide.. Functionally, together with its co-chaperonin GroES, plays an essential role in assisting protein folding. The GroEL-GroES system forms a nano-cage that allows encapsulation of the non-native substrate proteins and provides a physical environment optimized to promote and accelerate protein folding. This chain is Chaperonin GroEL, found in Rickettsia africae (strain ESF-5).